The primary structure comprises 944 residues: Calcium-transporting ATPase type 2C member 2 (944 aa).

Over Met1 to Tyr104 the chain is Cytoplasmic. An interaction with ORAI1 region spans residues Val69–Val93. Residues Leu105 to Leu125 traverse the membrane as a helical segment. Residues Thr126–Lys127 are Extracellular-facing. Residues Glu128–Ile148 traverse the membrane as a helical segment. Topologically, residues Gln149 to Ser229 are cytoplasmic. The chain crosses the membrane as a helical span at residues Pro230–Val250. The Extracellular portion of the chain corresponds to Gln251 to Lys291. The residue at position 262 (Thr262) is a Phosphothreonine. Ser266 is subject to Phosphoserine. Residues Leu292–Trp312 traverse the membrane as a helical segment. At Val313–Ala329 the chain is on the cytoplasmic side. Positions 330, 331, 333, and 335 each coordinate Ca(2+). Residues Val330 to Leu350 form a helical membrane-spanning segment. Over Arg351 to Ser748 the chain is Extracellular. The 4-aspartylphosphate intermediate role is filled by Asp377. Asp672 and Asp676 together coordinate Mg(2+). Residues Thr749–Met769 traverse the membrane as a helical segment. Ca(2+) is bound by residues Asn766 and Asp770. Residues Asp770 to Ala802 lie on the Cytoplasmic side of the membrane. A helical membrane pass occupies residues Leu803 to Trp823. The Extracellular segment spans residues Arg824–Arg835. A helical membrane pass occupies residues Thr836 to Leu853. The Cytoplasmic segment spans residues Ser854–Met872. A helical membrane pass occupies residues Phe873–Leu893. Residues Gln894–Ser903 are Extracellular-facing. A helical transmembrane segment spans residues Ala904–Leu924. Over Lys925 to Val944 the chain is Cytoplasmic.

This sequence belongs to the cation transport ATPase (P-type) (TC 3.A.3) family. Type IIA subfamily. Interacts (via N-terminus) with ORAI1 (via N- and C-termini); this interaction regulates Ca(2+) influx at the plasma membrane. Expressed in hippocampal neurons (at protein level). Expressed in lactating mammary epithelium (at protein level).

It localises to the golgi apparatus. The protein resides in the trans-Golgi network membrane. The protein localises to the cell membrane. It is found in the basolateral cell membrane. It carries out the reaction Ca(2+)(in) + ATP + H2O = Ca(2+)(out) + ADP + phosphate + H(+). The enzyme catalyses Mn(2+)(in) + ATP + H2O = Mn(2+)(out) + ADP + phosphate + H(+). Its function is as follows. ATP-driven pump that supplies the Golgi apparatus with Ca(2+) and Mn(2+) ions, both essential cofactors for processing and trafficking of newly synthesized proteins in the secretory pathway. Within a catalytic cycle, acquires Ca(2+) or Mn(2+) ions on the cytoplasmic side of the membrane and delivers them to the lumenal side. The transfer of ions across the membrane is coupled to ATP hydrolysis and is associated with a transient phosphorylation that shifts the pump conformation from inward-facing to outward-facing state. Induces Ca(2+) influx independently of its ATP-driven pump function. At the basolateral membrane of mammary epithelial cells, interacts with Ca(2+) channel ORAI1 and mediates Ca(2+) entry independently of the Ca(2+) content of endoplasmic reticulum or Golgi stores. May facilitate transepithelial transport of large quantities of Ca(2+) for milk secretion via activation of Ca(2+) influx channels at the plasma membrane and active Ca(2+) transport at the Golgi apparatus. This Mus musculus (Mouse) protein is Calcium-transporting ATPase type 2C member 2.